Consider the following 292-residue polypeptide: Large ribosomal subunit protein bL19m (292 aa).

Residues 39–68 form a disordered region; sequence GPGRRQITGPSEPGVFQPPPKPVIVDKRGP. Residue serine 77 is modified to Phosphoserine.

Belongs to the bacterial ribosomal protein bL19 family. In terms of assembly, component of the mitochondrial ribosome large subunit (39S) which comprises a 16S rRNA and about 50 distinct proteins.

The protein localises to the mitochondrion. The sequence is that of Large ribosomal subunit protein bL19m (MRPL19) from Bos taurus (Bovine).